The chain runs to 536 residues: Pre-mRNA-splicing factor SLU7 (536 aa).

Residues 22–42 form a disordered region; sequence EARKAGLAPAEVDEDGKEINP. The segment at 94-111 adopts a CCHC-type zinc-finger fold; the sequence is GACENCGAMTHDKKSCME. Residues 178-201 are disordered; it reads KLEEKDGEEGDENVASEEEDEEDG. The segment covering 182–200 has biased composition (acidic residues); the sequence is KDGEEGDENVASEEEDEED.

Belongs to the SLU7 family.

It is found in the nucleus. In terms of biological role, participates in the second catalytic step of pre-mRNA splicing, when the free hydroxyl group of exon I attacks the 3'-splice site to generate spliced mRNA and the excised lariat intron. In Oryza sativa subsp. indica (Rice), this protein is Pre-mRNA-splicing factor SLU7.